We begin with the raw amino-acid sequence, 562 residues long: Matrix metalloproteinase-25 (562 aa).

A signal peptide spans 1–21 (MRLRLRLLALLLLLLAPPARA). Residues 22–107 (PKPSAQDVSL…VAGLVRRRRR (86 aa)) constitute a propeptide that is removed on maturation. A Cysteine switch motif is present at residues 88–95 (PRCSLPDV). Residues C90 and H233 each coordinate Zn(2+). E234 is an active-site residue. Zn(2+)-binding residues include H237 and H243. The tract at residues 278 to 313 (LYGKAPQTPYDKPTRKPLAPPPQPPASPTHSPSFPI) is disordered. Residues 295-304 (LAPPPQPPAS) show a composition bias toward pro residues. 4 Hemopexin repeats span residues 314 to 363 (PDRC…WEGL), 367 to 412 (VRVV…GLPP), 413 to 461 (GEEV…EGAP), and 462 to 508 (PSPD…WLDC). C317 and C508 are disulfide-bonded. The interval 490-526 (SIKTEPDAPQPMGPNWLDCPAPSSGPRAPRPPKATPV) is disordered. The GPI-anchor amidated alanine moiety is linked to residue A539. Residues 540–562 (AGRWPAPIPLLLLPLLVGGVASR) constitute a propeptide, removed in mature form.

This sequence belongs to the peptidase M10A family. Requires Zn(2+) as cofactor. The cofactor is Ca(2+). In terms of processing, the precursor is cleaved by a furin endopeptidase. As to expression, expressed predominantly in leukocytes, lung and spleen. Expressed also in colon carcinoma, astrocytoma and glioblastomas.

The protein resides in the cell membrane. The protein localises to the secreted. It is found in the extracellular space. It localises to the extracellular matrix. Its function is as follows. May activate progelatinase A. The chain is Matrix metalloproteinase-25 (MMP25) from Homo sapiens (Human).